We begin with the raw amino-acid sequence, 560 residues long: DNA ligase B (560 aa).

Lys-124 functions as the N6-AMP-lysine intermediate in the catalytic mechanism.

The protein belongs to the NAD-dependent DNA ligase family. LigB subfamily.

It carries out the reaction NAD(+) + (deoxyribonucleotide)n-3'-hydroxyl + 5'-phospho-(deoxyribonucleotide)m = (deoxyribonucleotide)n+m + AMP + beta-nicotinamide D-nucleotide.. In terms of biological role, catalyzes the formation of phosphodiester linkages between 5'-phosphoryl and 3'-hydroxyl groups in double-stranded DNA using NAD as a coenzyme and as the energy source for the reaction. In Citrobacter koseri (strain ATCC BAA-895 / CDC 4225-83 / SGSC4696), this protein is DNA ligase B.